Consider the following 434-residue polypeptide: Glutamyl-tRNA reductase (434 aa).

Substrate contacts are provided by residues 49–52 (TCNR), Ser109, 114–116 (EPQ), and Gln120. Cys50 serves as the catalytic Nucleophile. 189–194 (GAGEMC) is an NADP(+) binding site.

Belongs to the glutamyl-tRNA reductase family. Homodimer.

The catalysed reaction is (S)-4-amino-5-oxopentanoate + tRNA(Glu) + NADP(+) = L-glutamyl-tRNA(Glu) + NADPH + H(+). The protein operates within porphyrin-containing compound metabolism; protoporphyrin-IX biosynthesis; 5-aminolevulinate from L-glutamyl-tRNA(Glu): step 1/2. Functionally, catalyzes the NADPH-dependent reduction of glutamyl-tRNA(Glu) to glutamate 1-semialdehyde (GSA). The polypeptide is Glutamyl-tRNA reductase (Citrifermentans bemidjiense (strain ATCC BAA-1014 / DSM 16622 / JCM 12645 / Bem) (Geobacter bemidjiensis)).